A 309-amino-acid polypeptide reads, in one-letter code: Elongation factor Ts (309 aa).

Residues 98–101 form an involved in Mg(2+) ion dislocation from EF-Tu region; sequence TDFV.

It belongs to the EF-Ts family.

It is found in the cytoplasm. Functionally, associates with the EF-Tu.GDP complex and induces the exchange of GDP to GTP. It remains bound to the aminoacyl-tRNA.EF-Tu.GTP complex up to the GTP hydrolysis stage on the ribosome. In Orientia tsutsugamushi (strain Boryong) (Rickettsia tsutsugamushi), this protein is Elongation factor Ts.